We begin with the raw amino-acid sequence, 60 residues long: Large ribosomal subunit protein uL30 (60 aa).

The protein belongs to the universal ribosomal protein uL30 family. In terms of assembly, part of the 50S ribosomal subunit.

This Dehalococcoides mccartyi (strain CBDB1) protein is Large ribosomal subunit protein uL30.